The following is a 148-amino-acid chain: Receptor activity-modifying protein 1 (148 aa).

Residues 1 to 26 (MAPGLRGLPRRGLWLLLAHHLFMVTA) form the signal peptide. 3 disulfide bridges follow: Cys27–Cys82, Cys40–Cys72, and Cys57–Cys104. Residues 27-118 (CRDPDYGTLI…RALRDPPNSI (92 aa)) are Extracellular-facing. A helical membrane pass occupies residues 119-140 (LCPFIVLPITVTLLMTALVVWR). Residues 141-148 (SKRTEGIV) lie on the Cytoplasmic side of the membrane.

It belongs to the RAMP family. Heterodimer of CALCRL and RAMP1; the interaction induces allosteric modulation of CALCRL function and CGRP1/CALCA and CGRP2/CALCB ligand specificity. Heterodimer of CALCR and RAMP1; interaction forms the AMYR1 receptor complex for amylin/IAPP and CGRP1/CALCA ligands.

Its subcellular location is the cell membrane. Functionally, accessory protein that interacts with and modulates the function of G-protein coupled receptors including calcitonin gene-related peptide type 1 receptor (CALCRL) and calcitonin receptor (CALCR). Required for the transport of CALCRL to the plasma membrane. Together with CALCRL, form the receptor complex for the calcitonin gene-related peptides CGRP1/CALCA and CGRP2/CALCB. Together with CALCR, form the AMYR1 receptor complex for amylin/IAPP and CGRP1/CALCA. This chain is Receptor activity-modifying protein 1, found in Rattus norvegicus (Rat).